The following is a 442-amino-acid chain: MYDGLKGFRDFYPGEQSARREVTDAIEDAASRYGFREIATPALERTEMYVDKSGEEIVEELYAFEDKGGRGVSMTPELTPTVARMVVAKGQELSKPIKWMSTRPFWRYEQVQQGRFREFYQTNIDVFGSSAPEADAEVLAVAADALTDLGLTNDDFEFRVSHRDILGGLVRALAADPDAVDTKAAIRAVDKRAKVDDGEYLGLLSDAGLDRATAQEFDDLISDVETVDDLDAVAEAGGEDVEAAVENLRNVLAAADDFGAGAFCEVSLTTARGLDYYTGVVFECFDSTGEVSRSVFGGGRYDDLIESFGGQPTPAVGVAPGHAPLSLLCQRAGVWPDEELTTDYYVLSVGDTRSEATALARDLRALGDDVVVEQDVSGRSFGAQLGYADSINAETVVVVGERDLENGEYTVKDMASGDETTVPVEEFPPEGGEELPTYEDYE.

The segment at 416–442 (SGDETTVPVEEFPPEGGEELPTYEDYE) is disordered. A compositionally biased stretch (acidic residues) spans 427–442 (FPPEGGEELPTYEDYE).

Belongs to the class-II aminoacyl-tRNA synthetase family.

The protein localises to the cytoplasm. The enzyme catalyses tRNA(His) + L-histidine + ATP = L-histidyl-tRNA(His) + AMP + diphosphate + H(+). The protein is Histidine--tRNA ligase of Halorubrum lacusprofundi (strain ATCC 49239 / DSM 5036 / JCM 8891 / ACAM 34).